Reading from the N-terminus, the 1465-residue chain is DNA polymerase III PolC-type (1465 aa).

The Exonuclease domain occupies 431 to 583 (DVETTGLSAM…YDAEATGRLL (153 aa)).

Belongs to the DNA polymerase type-C family. PolC subfamily.

The protein localises to the cytoplasm. It carries out the reaction DNA(n) + a 2'-deoxyribonucleoside 5'-triphosphate = DNA(n+1) + diphosphate. Its function is as follows. Required for replicative DNA synthesis. This DNA polymerase also exhibits 3' to 5' exonuclease activity. The polypeptide is DNA polymerase III PolC-type (Streptococcus pyogenes).